A 508-amino-acid chain; its full sequence is Putative inorganic phosphate transporter 1-13 (508 aa).

The Cytoplasmic segment spans residues 1 to 22 (MAGNQQLRVLHALDIARTQLYH). A helical membrane pass occupies residues 23-43 (FIAIVIAGMGFFTDAYDLFSI). Residues 44-64 (SLVADLLGHVYYHGELPRNIH) are Extracellular-facing. A helical transmembrane segment spans residues 65–85 (AAVTGIALCGTVPGQLVFGWL). Over 86–93 (GDKMGRKR) the chain is Cytoplasmic. A helical transmembrane segment spans residues 94–114 (VYGITLLLMVVSSLASGLSFS). At 115 to 117 (KHE) the chain is on the extracellular side. A helical membrane pass occupies residues 118-138 (GMNIIAVLCFFRFWLGVSIGG). At 139 to 159 (DYPLSATIMSEYANKRTRGAF) the chain is on the cytoplasmic side. The helical transmembrane segment at 160 to 180 (IAAVFAMQGFGNLAAGIIGMI) threads the bilayer. At 181 to 192 (VSAAFKHSSASK) the chain is on the extracellular side. The chain crosses the membrane as a helical span at residues 193–213 (IDYAWRIILMFGAIPAALTYH). The Cytoplasmic segment spans residues 214–277 (WRMKMPETAR…FEFLHRHGLH (64 aa)). A helical membrane pass occupies residues 278-298 (LLGTTVCWFVLDVTFYSLNIF). Residues 299-328 (MKNIFTEVGLLPRLDSEYHHTLQRMITMTA) lie on the Extracellular side of the membrane. Residues 329 to 349 (VHTFISLCGALPGYFFTVAFV) traverse the membrane as a helical segment. Residues 350 to 354 (DRIGR) are Cytoplasmic-facing. Residues 355–375 (VKIQLIGFTMMTVFMLCLAIP) form a helical membrane-spanning segment. Over 376 to 389 (YDQWLRHKNKYGFA) the chain is Extracellular. A helical transmembrane segment spans residues 390–410 (VMYGLTFFFANFGPNTTTFII). Over 411–424 (PAEIFPARLRSTCH) the chain is Cytoplasmic. Residues 425–445 (GISGAVGKIGAIVGVFGFLYT) traverse the membrane as a helical segment. Residues 446 to 450 (EYHIR) are Extracellular-facing. A helical transmembrane segment spans residues 451-471 (IFLFVLIGCNLVGFIFTLLLP). The Cytoplasmic portion of the chain corresponds to 472 to 508 (ESKGKSLEDLTGEIEEFQEEDEGSEVALSRPIHTVPL).

Belongs to the major facilitator superfamily. Phosphate:H(+) symporter (TC 2.A.1.9) family.

It localises to the membrane. Its function is as follows. High-affinity transporter for external inorganic phosphate. This chain is Putative inorganic phosphate transporter 1-13 (PHT1-13), found in Oryza sativa subsp. japonica (Rice).